A 230-amino-acid polypeptide reads, in one-letter code: Cytidylate kinase (230 aa).

An ATP-binding site is contributed by 17 to 25; that stretch reads GPTASGKGT.

The protein belongs to the cytidylate kinase family. Type 1 subfamily.

It localises to the cytoplasm. It carries out the reaction CMP + ATP = CDP + ADP. The catalysed reaction is dCMP + ATP = dCDP + ADP. The chain is Cytidylate kinase from Ralstonia nicotianae (strain ATCC BAA-1114 / GMI1000) (Ralstonia solanacearum).